Here is a 475-residue protein sequence, read N- to C-terminus: Argininosuccinate lyase (475 aa).

The protein belongs to the lyase 1 family. Argininosuccinate lyase subfamily.

It is found in the cytoplasm. It catalyses the reaction 2-(N(omega)-L-arginino)succinate = fumarate + L-arginine. The protein operates within amino-acid biosynthesis; L-arginine biosynthesis; L-arginine from L-ornithine and carbamoyl phosphate: step 3/3. In Streptomyces coelicolor (strain ATCC BAA-471 / A3(2) / M145), this protein is Argininosuccinate lyase.